We begin with the raw amino-acid sequence, 272 residues long: HMP-PP phosphatase (272 aa).

Residue Asp-8 is the Nucleophile of the active site. Mg(2+)-binding residues include Asp-8, Asp-10, and Asp-212.

This sequence belongs to the HAD-like hydrolase superfamily. Cof family. Mg(2+) is required as a cofactor.

It catalyses the reaction 4-amino-2-methyl-5-(diphosphooxymethyl)pyrimidine + H2O = 4-amino-2-methyl-5-(phosphooxymethyl)pyrimidine + phosphate + H(+). Its function is as follows. Catalyzes the hydrolysis of 4-amino-2-methyl-5-hydroxymethylpyrimidine pyrophosphate (HMP-PP) to 4-amino-2-methyl-5-hydroxymethylpyrimidine phosphate (HMP-P). The polypeptide is HMP-PP phosphatase (Salmonella agona (strain SL483)).